Here is a 387-residue protein sequence, read N- to C-terminus: MKIIADENMPYVQELFGDLGIIETVNGRSLTAEMVKDADVLLVRSVTQVDASLLSKNSQLTFVGSATIGTDHIDTEYLTQRQISFSNAPGCNATAVGEFAFIAMLELANRFGTSLKDKVVGIVGAGNTGSAVARCLQAYGVEVLLHDPLIEKSDPRNFVSLDELITRANVISLHVPITKSGEHKTWYLFDESRLNSLNADTWLLNCCRGEVVDNRALINVKQQRADIKVVLDVWEGEPNPMRELIPYVEFATPHIAGYSLEGKARGTYMLYQKLMQVLGKKEEKEMLALLPSFWTEQLTLTKEPSEKALLQLSRFVYDLRDDDALFRATLLEDPSKKAPVNSSNNNGFDLMRKNHKHRREFSALTLATTGQSEVDWLLNLGYSGVGR.

Substrate-binding residues include serine 45 and threonine 67. Aspartate 147 is a binding site for NAD(+). Arginine 208 is an active-site residue. Aspartate 232 serves as a coordination point for NAD(+). Glutamate 237 is an active-site residue. Histidine 254 (proton donor) is an active-site residue. Glycine 257 is an NAD(+) binding site. A substrate-binding site is contributed by tyrosine 258.

The protein belongs to the D-isomer specific 2-hydroxyacid dehydrogenase family. PdxB subfamily. As to quaternary structure, homodimer.

It localises to the cytoplasm. It carries out the reaction 4-phospho-D-erythronate + NAD(+) = (R)-3-hydroxy-2-oxo-4-phosphooxybutanoate + NADH + H(+). The protein operates within cofactor biosynthesis; pyridoxine 5'-phosphate biosynthesis; pyridoxine 5'-phosphate from D-erythrose 4-phosphate: step 2/5. Functionally, catalyzes the oxidation of erythronate-4-phosphate to 3-hydroxy-2-oxo-4-phosphonooxybutanoate. In Shewanella woodyi (strain ATCC 51908 / MS32), this protein is Erythronate-4-phosphate dehydrogenase.